A 1087-amino-acid chain; its full sequence is Platelet-derived growth factor receptor alpha (1087 aa).

An N-terminal signal peptide occupies residues 1–24; the sequence is MMPAMRASLILGCLLIIGPWAILA. The Extracellular segment spans residues 25 to 530; the sequence is ENPLPTIFPD…PTLRSELTVA (506 aa). Ig-like C2-type domains are found at residues 27 to 114 and 118 to 211; these read PLPT…SEIE and IYIY…LQTW. A disulfide bridge connects residues cysteine 50 and cysteine 101. 2 N-linked (GlcNAc...) asparagine glycosylation sites follow: asparagine 77 and asparagine 104. Cysteines 151 and 192 form a disulfide. N-linked (GlcNAc...) asparagine glycans are attached at residues asparagine 216, asparagine 282, asparagine 309, asparagine 356, asparagine 362, asparagine 461, and asparagine 471. 3 consecutive Ig-like C2-type domains span residues 217–309, 315–409, and 417–519; these read ISVE…KKTN, KGFI…KSYS, and PALI…LKLV. Cysteine 238 and cysteine 293 are oxidised to a cystine. A disulfide bridge connects residues cysteine 438 and cysteine 503. A helical transmembrane segment spans residues 531–551; it reads AAVLVLLVIVIISLIVLVIIW. Topologically, residues 552–1087 are cytoplasmic; sequence KQKPRYEIRW…SSDLVEDSFL (536 aa). Phosphotyrosine; by autocatalysis is present on residues tyrosine 574 and tyrosine 576. The Protein kinase domain occupies 595–970; it reads LVLGRILGSG…CYETVLHDFL (376 aa). Residues 601–609 and lysine 629 each bind ATP; that span reads LGSGAFGKV. A phosphotyrosine; by autocatalysis mark is found at tyrosine 722, tyrosine 733, tyrosine 744, tyrosine 756, and tyrosine 764. Aspartate 818 (proton acceptor) is an active-site residue. Residues tyrosine 849, tyrosine 988, and tyrosine 1017 each carry the phosphotyrosine; by autocatalysis modification. Positions 1017–1064 are disordered; that stretch reads YIIPLPDIDPVSEDESGKRNRHSSQTSEESAIETGSSSSTFIKRDDET. The span at 1039 to 1057 shows a compositional bias: polar residues; that stretch reads SSQTSEESAIETGSSSSTF.

It belongs to the protein kinase superfamily. Tyr protein kinase family. CSF-1/PDGF receptor subfamily. As to quaternary structure, interacts with homodimeric pdgfa, pdgfb and pdgfc, and with heterodimers formed by pdgfa and pdgfb. Monomer in the absence of bound ligand. Interaction with dimeric pdgfa, pdgfb and/or pdgfc leads to receptor dimerization, where both pdgfra homodimers and heterodimers with pdgfrb are observed. Ubiquitinated, leading to its internalization and degradation. Post-translationally, autophosphorylated on tyrosine residues upon ligand binding. Autophosphorylation occurs in trans, i.e. one subunit of the dimeric receptor phosphorylates tyrosine residues on the other subunit.

The protein localises to the cell membrane. The protein resides in the cell projection. It is found in the cilium. Its subcellular location is the golgi apparatus. It catalyses the reaction L-tyrosyl-[protein] + ATP = O-phospho-L-tyrosyl-[protein] + ADP + H(+). With respect to regulation, present in an inactive conformation in the absence of bound ligand. Binding of pdgfa and/or pdgfb leads to dimerization and activation by autophosphorylation on tyrosine residues. Tyrosine-protein kinase that acts as a cell-surface receptor for pdgfa, pdgfb and pdgfc and plays an essential role in the regulation of embryonic development, cell proliferation, survival and chemotaxis. Depending on the context, promotes or inhibits cell proliferation and cell migration. Plays an important role in the differentiation of bone marrow-derived mesenchymal stem cells. Required for normal skeleton development. Required for normal development of the gastrointestinal tract. Plays a role in cell migration and chemotaxis in wound healing. Plays a role in platelet activation, secretion of agonists from platelet granules, and in thrombin-induced platelet aggregation. Binding of its cognate ligands - homodimeric pdgfa, homodimeric pdgfb, heterodimers formed by pdgfa and pdgfb or homodimeric pdgfc -leads to the activation of several signaling cascades; the response depends on the nature of the bound ligand and is modulated by the formation of heterodimers between pdgfra and pdgfrb. Phosphorylates pik3r1, plcg1, and ptpn11. Activation of plcg1 leads to the production of the cellular signaling molecules diacylglycerol and inositol 1,4,5-trisphosphate, mobilization of cytosolic Ca(2+) and the activation of protein kinase C. Phosphorylates pik3r1, the regulatory subunit of phosphatidylinositol 3-kinase, and thereby mediates activation of the akt1 signaling pathway. Mediates activation of hras and of the MAP kinases mapk1/erk2 and/or mapk3/erk1. Promotes activation of stat family members stat1, stat3 and stat5a and/or stat5b. Receptor signaling is down-regulated by protein phosphatases that dephosphorylate the receptor and its down-stream effectors, and by rapid internalization of the activated receptor. The protein is Platelet-derived growth factor receptor alpha (pdgfra) of Xenopus laevis (African clawed frog).